We begin with the raw amino-acid sequence, 309 residues long: MEIQFLGTGAGQPAKARNVSSLVLKLLDEINEVWMFDCGEGTQRQILETTIKPRKVKKIFITHMHGDHVFGLPGFLSSRAFQANEEQTDLDIYGPVGIKSFVMTGLRTSGSRLPYRIHFHEFDESSLGKIMETDKFTVYAEKLDHTIFCMGYRVVQKDLEGTLDAEALKLAGVPFGPLFGKVKNGENVTLEDGREIIAKDYISEPKKGKVITILGDTRKTDASIRLALGADVLVHESTYGKGDERIAKSHGHSTNMQAADIAKQANAKRLLLNHVSARFMGRDCWQMEEDAKTIFSNTHLVRDLEEVGI.

Residues H63, H65, D67, H68, H145, D216, and H274 each coordinate Zn(2+). D67 acts as the Proton acceptor in catalysis.

Belongs to the RNase Z family. As to quaternary structure, homodimer. Zn(2+) is required as a cofactor.

The catalysed reaction is Endonucleolytic cleavage of RNA, removing extra 3' nucleotides from tRNA precursor, generating 3' termini of tRNAs. A 3'-hydroxy group is left at the tRNA terminus and a 5'-phosphoryl group is left at the trailer molecule.. Its function is as follows. Zinc phosphodiesterase, which displays some tRNA 3'-processing endonuclease activity. Probably involved in tRNA maturation, by removing a 3'-trailer from precursor tRNA. The sequence is that of Ribonuclease Z from Streptococcus agalactiae serotype Ia (strain ATCC 27591 / A909 / CDC SS700).